Consider the following 250-residue polypeptide: uncharacterized protein (250 aa).

It belongs to the carbohydrate kinase PfkB family.

This is an uncharacterized protein from Archaeoglobus fulgidus (strain ATCC 49558 / DSM 4304 / JCM 9628 / NBRC 100126 / VC-16).